Consider the following 449-residue polypeptide: UNC93-like protein MFSD11 (449 aa).

Residues 8–28 (LFNIVILGVAFMFMFTAFQTC) form a helical membrane-spanning segment. Residue N40 is glycosylated (N-linked (GlcNAc...) asparagine). The next 5 helical transmembrane spans lie at 53–73 (AIIY…VAIV), 74–94 (GPQI…AVFI), 96–116 (PFPW…AVLW), 138–158 (IFWA…YFAW), and 170–190 (RTVF…FFLI). S204 is modified (phosphoserine). 6 consecutive transmembrane segments (helical) span residues 239–259 (MLLL…FSGV), 277–297 (LIGL…SLFG), 309–329 (PVVL…FLNM), 359–379 (FLLG…LGFL), 385–405 (APAF…AFFY), and 410–430 (LLHW…ISFF).

This sequence belongs to the unc-93 family. In terms of tissue distribution, widely expressed.

Its subcellular location is the membrane. The polypeptide is UNC93-like protein MFSD11 (Mfsd11) (Mus musculus (Mouse)).